Consider the following 411-residue polypeptide: Protrudin (411 aa).

Positions 1-27 (MQTSEREGSGPELSPSVMPEAPLESPP) are disordered. Over 1–66 (MQTSEREGSG…AGDGVRYLLR (66 aa)) the chain is Cytoplasmic. Residues 1–92 (MQTSEREGSG…LFLTLNEGAW (92 aa)) form a sufficient for homooligomerization region. The sufficient for localization to endoplasmic reticulum tubular network and for interactions with REEP1, REEP5, ATL1, ATL2, ATL3 and SPAST stretch occupies residues 1–205 (MQTSEREGSG…LYLLPLCWVL (205 aa)). Positions 51–64 (LEPLKDAGDGVRYL) are necessary for interaction with RAB11A and function in neurite outgrowth. A helical transmembrane segment spans residues 67–87 (WQMPLCSLLTCLGLNVLFLTL). Position 88 (Asn88) is a topological domain, lumenal. Residues 89–109 (EGAWYSVGALMISVPALLGYL) form a helical membrane-spanning segment. Topologically, residues 110–187 (QEVCRARLPD…NPVVSSQFYG (78 aa)) are cytoplasmic. The helical intramembrane region spans 188-208 (ALLGTVCMLYLLPLCWVLTLL). Residues 209 to 411 (NSTLFLGNVE…CASCNQTLSK (203 aa)) are Cytoplasmic-facing. A disordered region spans residues 234–286 (MNPKQEEHAFESPPPPDVGGKDGLMDSTPALTPTEDLTPGSVEEAEEAEPDEE). The interval 271-361 (TPGSVEEAEE…GCSATFSVLK (91 aa)) is necessary for interaction with KIF5A. Acidic residues predominate over residues 276 to 286 (EEAEEAEPDEE). Positions 286 to 292 (EFKDAIE) are necessary for interaction with VAPA and function in cell projections formation. The FYVE-type zinc finger occupies 344 to 410 (TNNFGNCTGC…VCASCNQTLS (67 aa)). Positions 350, 353, 366, 369, 374, 377, 402, and 405 each coordinate Zn(2+).

In terms of assembly, can form homooligomers (monomers, dimers and tetramers). Interacts with RAB11A (GDP-bound form); regulates RAB11A. Interacts with FKBP8; may negatively regulate ZFYVE27 phosphorylation. Interacts with VAPA (via MSP domain); may regulate ZFYVE27 retention in the endoplasmic reticulum and its function in cell projections formation. Interacts with VAPB (via MSP domain). Interacts with REEP1, REEP5 and ATL1. Interacts with ATL2, ATL3 and SPAST. Interacts with KIF5A and RTN3. Interacts with RAB11B (GDP-bound form), SURF4, KIF5B and KIF5C. Phosphorylated. Phosphorylation is induced by NGF through the MAPK/ERK pathway and modulates interaction with RAB11A.

It is found in the recycling endosome membrane. Its subcellular location is the endoplasmic reticulum membrane. The protein resides in the cell projection. The protein localises to the growth cone membrane. Its function is as follows. Key regulator of RAB11-dependent vesicular trafficking during neurite extension through polarized membrane transport. Promotes axonal elongation and contributes to the establishment of neuronal cell polarity. Involved in nerve growth factor-induced neurite formation in VAPA-dependent manner. Contributes to both the formation and stabilization of the tubular ER network. Involved in ER morphogenesis by regulating the sheet-to-tubule balance and possibly the density of tubule interconnections. Acts as an adapter protein and facilitates the interaction of KIF5A with VAPA, VAPB, SURF4, RAB11A, RAB11B and RTN3 and the ZFYVE27-KIF5A complex contributes to the transport of these proteins in neurons. Can induce formation of neurite-like membrane protrusions in non-neuronal cells in a KIF5A/B-dependent manner. This Homo sapiens (Human) protein is Protrudin (ZFYVE27).